The chain runs to 171 residues: Ribosome maturation factor RimM (171 aa).

Positions alanine 96–leucine 170 constitute a PRC barrel domain.

Belongs to the RimM family. Binds ribosomal protein uS19.

It is found in the cytoplasm. In terms of biological role, an accessory protein needed during the final step in the assembly of 30S ribosomal subunit, possibly for assembly of the head region. Essential for efficient processing of 16S rRNA. May be needed both before and after RbfA during the maturation of 16S rRNA. It has affinity for free ribosomal 30S subunits but not for 70S ribosomes. The polypeptide is Ribosome maturation factor RimM (Bacillus anthracis (strain A0248)).